A 272-amino-acid polypeptide reads, in one-letter code: Magnetosome protein MamQ (272 aa).

The Cytoplasmic segment spans residues 1–46 (MAVSDADASSVDKVESITLQRVKQSEELLAQLYVVEESPRRMGRGP). The helical transmembrane segment at 47–67 (VQLMLAISVLSLVAFITTLLM) threads the bilayer. The Lumenal portion of the chain corresponds to 68 to 272 (RYNAFVTMYE…PLTHSQESKN (205 aa)).

Belongs to the LemA family.

The protein resides in the magnetosome membrane. The protein localises to the cell inner membrane. In terms of biological role, essential for magnetosome formation. Not essential for formation of magnetosome membrane vesicles. One of 7 genes (mamLQBIEMO) able to induce magnetosome membrane biogenesis; coexpression of mamLQRBIEMO in a deletion of the 17 gene mamAB operon restores magnetosome vesicle formation but not magnetite biosynthesis. This Magnetospirillum gryphiswaldense (strain DSM 6361 / JCM 21280 / NBRC 15271 / MSR-1) protein is Magnetosome protein MamQ.